Here is a 741-residue protein sequence, read N- to C-terminus: Melanoma-associated antigen D4 (741 aa).

Over residues 1-13 (MAEGSFSVQSESY) the composition is skewed to polar residues. Disordered stretches follow at residues 1-27 (MAEGSFSVQSESYSVEDMDEGSDEVGE), 136-206 (RVAT…EGPS), 247-296 (MAFP…KALA), and 323-379 (PEGA…QPSL). The segment covering 14 to 27 (SVEDMDEGSDEVGE) has biased composition (acidic residues). Polar residues-rich tracts occupy residues 140–151 (PQVSGEDTQPTT) and 187–196 (TSAQSQTGSP). The span at 354 to 363 (DEYESSEEER) shows a compositional bias: acidic residues. The 199-residue stretch at 413–611 (LQERANKLVK…REWKAHFLEA (199 aa)) folds into the MAGE domain. Residues 700–720 (VSSGTNGGASTSVLDGPSTSS) are disordered. Positions 701–720 (SSGTNGGASTSVLDGPSTSS) are enriched in polar residues.

Interacts with TRIM27. Expressed only in brain and ovary among normal tissues. Isoform 1 and isoform 2 are specifically expressed in glioma cells among cancer cells. Detected in some renal cell carcinoma samples.

In terms of biological role, may enhance ubiquitin ligase activity of RING-type zinc finger-containing E3 ubiquitin-protein ligases. Proposed to act through recruitment and/or stabilization of the Ubl-conjugating enzyme (E2) at the E3:substrate complex. This Homo sapiens (Human) protein is Melanoma-associated antigen D4 (MAGED4).